Consider the following 479-residue polypeptide: Serralysin C (479 aa).

Residues 1–17 (MGKNLSLRQDDAQHALS) constitute a propeptide that is removed on maturation. Residue His188 participates in Zn(2+) binding. The active site involves Glu189. Zn(2+) is bound by residues His192 and Tyr228. Ca(2+) is bound by residues Arg265, Gly267, Asp297, Gly299, Gly300, Asp302, Thr339, Glu341, Gly346, Gly348, Asp350, Asn355, Ala357, Asn359, Gly363, Gly364, Ala365, Gly366, Asp368, Gly372, Gly373, Gly375, Asp377, Gly381, Gly382, Ala383, Gly384, Asp386, Asp395, Asp402, and Asp412. Hemolysin-type calcium-binding repeat units follow at residues 344-361 (IGGS…DNIL), 362-379 (QGGA…ADTL), and 380-397 (YGGA…QDST).

Belongs to the peptidase M10B family. It depends on Ca(2+) as a cofactor. Requires Zn(2+) as cofactor.

It is found in the secreted. It carries out the reaction Preferential cleavage of bonds with hydrophobic residues in P1'.. In Dickeya chrysanthemi (Pectobacterium chrysanthemi), this protein is Serralysin C (prtC).